Consider the following 489-residue polypeptide: Glutamate--tRNA ligase (489 aa).

Residues 12-22 (PSPTGIPHVGM) carry the 'HIGH' region motif. The 'KMSKS' region signature appears at 256 to 260 (KLSKR). Position 259 (Lys-259) interacts with ATP.

This sequence belongs to the class-I aminoacyl-tRNA synthetase family. Glutamate--tRNA ligase type 1 subfamily. In terms of assembly, monomer.

Its subcellular location is the cytoplasm. The enzyme catalyses tRNA(Glu) + L-glutamate + ATP = L-glutamyl-tRNA(Glu) + AMP + diphosphate. Functionally, catalyzes the attachment of glutamate to tRNA(Glu) in a two-step reaction: glutamate is first activated by ATP to form Glu-AMP and then transferred to the acceptor end of tRNA(Glu). The chain is Glutamate--tRNA ligase from Mycobacterium marinum (strain ATCC BAA-535 / M).